Consider the following 952-residue polypeptide: Alpha-L-rhamnosidase (952 aa).

Positions 1–21 are cleaved as a signal peptide; that stretch reads MKYNKLLFSLLLLAVFCFSCK. Alpha-L-rhamnose is bound by residues Asp520, 524-525, Asp532, and Trp594; that span reads RE. The active-site Proton donor is Glu525. Residue Glu809 is the Proton acceptor of the active site. Residue His826 coordinates alpha-L-rhamnose.

Belongs to the glycosyl hydrolase 78 family.

The protein resides in the cell membrane. It catalyses the reaction Hydrolysis of terminal non-reducing alpha-L-rhamnose residues in alpha-L-rhamnosides.. Alpha-L-rhamnosidase that may be involved in ulvan degradation. Ulvan is the main polysaccharide component of the Ulvales (green seaweed) cell wall. It is composed of disaccharide building blocks comprising 3-sulfated rhamnose (Rha3S) linked to D-glucuronic acid (GlcA), L-iduronic acid (IduA), or D-xylose (Xyl). The chain is Alpha-L-rhamnosidase from Formosa agariphila (strain DSM 15362 / KCTC 12365 / LMG 23005 / KMM 3901 / M-2Alg 35-1).